The primary structure comprises 307 residues: 4-hydroxythreonine-4-phosphate dehydrogenase (307 aa).

His126 and Thr127 together coordinate substrate. 3 residues coordinate a divalent metal cation: His156, His195, and His251. The substrate site is built by Lys259, Asn268, and Arg277.

The protein belongs to the PdxA family. In terms of assembly, homodimer. Requires Zn(2+) as cofactor. It depends on Mg(2+) as a cofactor. Co(2+) serves as cofactor.

The protein localises to the cytoplasm. It carries out the reaction 4-(phosphooxy)-L-threonine + NAD(+) = 3-amino-2-oxopropyl phosphate + CO2 + NADH. It participates in cofactor biosynthesis; pyridoxine 5'-phosphate biosynthesis; pyridoxine 5'-phosphate from D-erythrose 4-phosphate: step 4/5. Functionally, catalyzes the NAD(P)-dependent oxidation of 4-(phosphooxy)-L-threonine (HTP) into 2-amino-3-oxo-4-(phosphooxy)butyric acid which spontaneously decarboxylates to form 3-amino-2-oxopropyl phosphate (AHAP). The sequence is that of 4-hydroxythreonine-4-phosphate dehydrogenase from Helicobacter pylori (strain G27).